Here is a 568-residue protein sequence, read N- to C-terminus: DNA mismatch repair protein MutL (568 aa).

Belongs to the DNA mismatch repair MutL/HexB family.

This protein is involved in the repair of mismatches in DNA. It is required for dam-dependent methyl-directed DNA mismatch repair. May act as a 'molecular matchmaker', a protein that promotes the formation of a stable complex between two or more DNA-binding proteins in an ATP-dependent manner without itself being part of a final effector complex. In Nostoc punctiforme (strain ATCC 29133 / PCC 73102), this protein is DNA mismatch repair protein MutL.